Here is a 331-residue protein sequence, read N- to C-terminus: Homoserine O-succinyltransferase (331 aa).

The active-site Acyl-thioester intermediate is the cysteine 141. Positions 162 and 190 each coordinate substrate. Histidine 233 serves as the catalytic Proton acceptor. The active site involves glutamate 235. Arginine 247 serves as a coordination point for substrate.

The protein belongs to the MetA family.

It is found in the cytoplasm. The enzyme catalyses L-homoserine + succinyl-CoA = O-succinyl-L-homoserine + CoA. It functions in the pathway amino-acid biosynthesis; L-methionine biosynthesis via de novo pathway; O-succinyl-L-homoserine from L-homoserine: step 1/1. Functionally, transfers a succinyl group from succinyl-CoA to L-homoserine, forming succinyl-L-homoserine. The chain is Homoserine O-succinyltransferase from Methylorubrum extorquens (strain DSM 6343 / CIP 106787 / DM4) (Methylobacterium extorquens).